A 318-amino-acid polypeptide reads, in one-letter code: Pantothenate synthetase (318 aa).

44–51 (MGALHQGH) contacts ATP. H51 acts as the Proton donor in catalysis. Residue Q75 participates in (R)-pantoate binding. Q75 provides a ligand contact to beta-alanine. 161-164 (GEKD) serves as a coordination point for ATP. Q167 lines the (R)-pantoate pocket. ATP contacts are provided by residues V190 and 198 to 201 (LSSR). Residues 295–318 (DGHPNLDSQPEPAGTDPALLPPAR) form a disordered region.

It belongs to the pantothenate synthetase family. As to quaternary structure, homodimer.

The protein localises to the cytoplasm. It catalyses the reaction (R)-pantoate + beta-alanine + ATP = (R)-pantothenate + AMP + diphosphate + H(+). It participates in cofactor biosynthesis; (R)-pantothenate biosynthesis; (R)-pantothenate from (R)-pantoate and beta-alanine: step 1/1. In terms of biological role, catalyzes the condensation of pantoate with beta-alanine in an ATP-dependent reaction via a pantoyl-adenylate intermediate. This Nocardia farcinica (strain IFM 10152) protein is Pantothenate synthetase.